The primary structure comprises 384 residues: Dual-specificity RNA methyltransferase RlmN (384 aa).

The active-site Proton acceptor is the glutamate 105. The region spanning 111–350 (EDDRATLCVS…TIVRKTRGDD (240 aa)) is the Radical SAM core domain. An intrachain disulfide couples cysteine 118 to cysteine 355. The [4Fe-4S] cluster site is built by cysteine 125, cysteine 129, and cysteine 132. Residues 179–180 (GE), serine 211, 233–235 (SLH), and asparagine 312 contribute to the S-adenosyl-L-methionine site. Cysteine 355 acts as the S-methylcysteine intermediate in catalysis.

It belongs to the radical SAM superfamily. RlmN family. The cofactor is [4Fe-4S] cluster.

Its subcellular location is the cytoplasm. It carries out the reaction adenosine(2503) in 23S rRNA + 2 reduced [2Fe-2S]-[ferredoxin] + 2 S-adenosyl-L-methionine = 2-methyladenosine(2503) in 23S rRNA + 5'-deoxyadenosine + L-methionine + 2 oxidized [2Fe-2S]-[ferredoxin] + S-adenosyl-L-homocysteine. The enzyme catalyses adenosine(37) in tRNA + 2 reduced [2Fe-2S]-[ferredoxin] + 2 S-adenosyl-L-methionine = 2-methyladenosine(37) in tRNA + 5'-deoxyadenosine + L-methionine + 2 oxidized [2Fe-2S]-[ferredoxin] + S-adenosyl-L-homocysteine. Its function is as follows. Specifically methylates position 2 of adenine 2503 in 23S rRNA and position 2 of adenine 37 in tRNAs. m2A2503 modification seems to play a crucial role in the proofreading step occurring at the peptidyl transferase center and thus would serve to optimize ribosomal fidelity. The chain is Dual-specificity RNA methyltransferase RlmN from Escherichia coli O6:H1 (strain CFT073 / ATCC 700928 / UPEC).